The chain runs to 228 residues: PKHD-type hydroxylase YbiX (228 aa).

Residues 78-177 (TLSTPLFNRY…RVASFIWIQS (100 aa)) enclose the Fe2OG dioxygenase domain. Residues His96, Asp98, and His158 each contribute to the Fe cation site. Arg168 is a 2-oxoglutarate binding site.

Fe(2+) serves as cofactor. The cofactor is L-ascorbate.

The sequence is that of PKHD-type hydroxylase YbiX from Escherichia coli O157:H7.